Reading from the N-terminus, the 863-residue chain is MICAL-like protein 1 (863 aa).

In terms of domain architecture, Calponin-homology (CH) spans 2–108 (AGPRGALLAW…YVSQYYNHFC (107 aa)). Disordered regions lie at residues 119 to 162 (RKGL…TPSS) and 224 to 670 (GTRS…PLIK). Positions 125–135 (CSPPSVAPTPV) are enriched in pro residues. Low complexity-rich tracts occupy residues 143 to 159 (GEEL…TGQT) and 224 to 244 (GTRS…HQQQ). The LIM zinc-binding domain occupies 162-225 (STCAACQQHV…EHCARLGPGT (64 aa)). 2 positions are modified to phosphoserine: Ser-295 and Ser-309. Residue Thr-318 is modified to Phosphothreonine. Residues 325 to 340 (LQQENLVEQAGSSSLV) show a composition bias toward polar residues. Pro residues predominate over residues 384–395 (APLPPSSSPGPP). Ser-391 bears the Phosphoserine mark. Residues 425–427 (NPF) carry the NPF1 motif. The span at 427–438 (FEEEEEDKEEEA) shows a compositional bias: acidic residues. Low complexity predominate over residues 439 to 450 (PAAPSLATSPAL). Phosphothreonine is present on residues Thr-467 and Thr-469. A phosphoserine mark is found at Ser-470, Ser-471, Ser-484, and Ser-486. 3 stretches are compositionally biased toward low complexity: residues 482–495 (APSA…ASRL), 505–520 (PSPA…ESAS), and 553–566 (SLST…SGEL). A phosphoserine mark is found at Ser-578 and Ser-621. An NPF2 motif is present at residues 633-635 (NPF). Residues 638 to 656 (KPSPAASPATKKATKGSKP) show a composition bias toward low complexity. Residues 652–863 (KGSKPVRPPA…AKSKSPRDKS (212 aa)) form a mediates the interaction with RAB13 and RAB35 and intramolecular interaction with the CH domain region. Positions 671-818 (RKVQADQYIP…EEEEDKMLEA (148 aa)) constitute a bMERB domain. Residues 682-711 (EDIHGEMDTIERRLDALEHRGVLLEEKLRG) are a coiled coil. Positions 700–863 (HRGVLLEEKL…AKSKSPRDKS (164 aa)) are necessary and sufficient to associate with tubular recycling endosome membranes, mediate phosphatidic acid-binding and membrane tubulation. At Ser-740 the chain carries Phosphoserine. Residues 785 to 830 (MQELVTLIEQRNAIINCLDEDRQREEEEDKMLEAMIKKKEFQREAE) adopt a coiled-coil conformation.

In terms of assembly, homooligomer. Interacts (via NPF1 motif) with EHD1 (via EH domain); the interaction is direct and probably recruits EHD1 to membranes. Interacts with EHD3 (via EH domain). Interacts with RAB35 (GTP-bound form); the interaction is direct and probably recruits MICALL1 to membranes. Interacts with ACAP2; the interaction is indirect through RAB35. Interacts with RAB8A (GTP-bound form); regulates RAB8A association with recycling endosomes. Interacts with RAB13 (GTP-bound form). Interacts with ARF6 (GTP-bound form). Interacts with PACSIN2 (via the SH3 domain). Interacts with DPYSL2.

The protein localises to the recycling endosome membrane. The protein resides in the late endosome membrane. It localises to the cell projection. Its subcellular location is the cilium membrane. It is found in the cytoplasm. The protein localises to the cytoskeleton. The protein resides in the microtubule organizing center. It localises to the centrosome. Its subcellular location is the centriole. Its function is as follows. Lipid-binding protein with higher affinity for phosphatidic acid, a lipid enriched in recycling endosome membranes. On endosome membranes, acts as a downstream effector of Rab proteins recruiting cytosolic proteins to regulate membrane tubulation. Involved in a late step of receptor-mediated endocytosis regulating for instance endocytosed-EGF receptor trafficking. Alternatively, regulates slow endocytic recycling of endocytosed proteins back to the plasma membrane. Also involved in cargo protein delivery to the plasma membrane. Plays a role in ciliogenesis coordination, recruits EHD1 to primary cilium where it is anchored to the centriole through interaction with tubulins. May indirectly play a role in neurite outgrowth. The chain is MICAL-like protein 1 (MICALL1) from Homo sapiens (Human).